The chain runs to 330 residues: MKKIAVDAMGGDYAPKAIVEGVNQAISDFSDIEVQLYGDQKKIEKYLTVTERVSIIHTEEKINSDDEPAKAVRRKKQSSMVLGAKAVKDGVAQAFISAGNTGALLAAGLFVVGRIKGVDRPGLMSTMPTLDGVGFDMLDLGANAENTASHLHQYAILGSFYAKNVRGIEIPRVGLLNNGTEETKGDSLHKEAYELLAAEPSINFIGNIEARDLMSSVADVVVTDGFTGNAVLKTMEGTAMSIMGSLKSSIKSGGVKAKLGALLLKDSLYQLKDNMDYSSAGGAVLFGLKAPIVKCHGSSDSKAVYSTLKQVRTMLETQVVDQLVDAFTDE.

Belongs to the PlsX family. As to quaternary structure, homodimer. Probably interacts with PlsY.

Its subcellular location is the cytoplasm. The enzyme catalyses a fatty acyl-[ACP] + phosphate = an acyl phosphate + holo-[ACP]. It functions in the pathway lipid metabolism; phospholipid metabolism. Catalyzes the reversible formation of acyl-phosphate (acyl-PO(4)) from acyl-[acyl-carrier-protein] (acyl-ACP). This enzyme utilizes acyl-ACP as fatty acyl donor, but not acyl-CoA. This is Phosphate acyltransferase from Streptococcus agalactiae serotype Ia (strain ATCC 27591 / A909 / CDC SS700).